The sequence spans 99 residues: ATP-dependent Clp protease adapter protein ClpS (99 aa).

Belongs to the ClpS family. Binds to the N-terminal domain of the chaperone ClpA.

Involved in the modulation of the specificity of the ClpAP-mediated ATP-dependent protein degradation. The sequence is that of ATP-dependent Clp protease adapter protein ClpS from Helicobacter hepaticus (strain ATCC 51449 / 3B1).